Consider the following 269-residue polypeptide: Glutamate racemase (269 aa).

Substrate contacts are provided by residues Asp-11–Ser-12 and Tyr-43–Gly-44. Residue Cys-74 is the Proton donor/acceptor of the active site. Residue Asn-75–Thr-76 participates in substrate binding. The active-site Proton donor/acceptor is Cys-185. Thr-186–His-187 contributes to the substrate binding site.

Belongs to the aspartate/glutamate racemases family.

The enzyme catalyses L-glutamate = D-glutamate. The protein operates within cell wall biogenesis; peptidoglycan biosynthesis. Provides the (R)-glutamate required for cell wall biosynthesis. This Bacillus cereus (strain G9842) protein is Glutamate racemase.